We begin with the raw amino-acid sequence, 780 residues long: Ribonucleoside-diphosphate reductase large subunit (780 aa).

Residues Thr177, 192–193 (SC), Gly223, 393–397 (NLCAE), and 595–599 (PTVGS) each bind substrate. Cys193 and Cys409 are disulfide-bonded. The Proton acceptor role is filled by Asn393. The active-site Cysteine radical intermediate is Cys395. The active-site Proton acceptor is Glu397.

Belongs to the ribonucleoside diphosphate reductase large chain family. Heterotetramer composed of a homodimer of the large subunit (R1) and a homodimer of the small subunit (R2). Larger multisubunit protein complex are also active, composed of (R1)n(R2)n.

It catalyses the reaction a 2'-deoxyribonucleoside 5'-diphosphate + [thioredoxin]-disulfide + H2O = a ribonucleoside 5'-diphosphate + [thioredoxin]-dithiol. In terms of biological role, ribonucleoside-diphosphate reductase holoenzyme provides the precursors necessary for viral DNA synthesis. Allows virus growth in non-dividing cells, as well as reactivation from latency in infected hosts. Catalyzes the biosynthesis of deoxyribonucleotides from the corresponding ribonucleotides. The sequence is that of Ribonucleoside-diphosphate reductase large subunit from Connochaetes taurinus (Blue wildebeest).